The chain runs to 136 residues: Nodulation protein K (136 aa).

The sequence is that of Nodulation protein K (nodK) from Bradyrhizobium sp. (strain ANU 289).